The sequence spans 216 residues: Transmembrane emp24 domain-containing protein eca (216 aa).

An N-terminal signal peptide occupies residues 1 to 20; sequence MRDQWICLALVLCALHSACG. Residues 21 to 183 are Lumenal-facing; that stretch reads LYFHISETER…RHTSESTNSR (163 aa). Positions 30–126 constitute a GOLD domain; sequence RKCFIEEVPD…QLRVHLDIQV (97 aa). The stretch at 134–164 forms a coiled coil; it reads ANVAQKEKLTELQLRIRQLLDQVEQITKEQN. A helical transmembrane segment spans residues 184-203; sequence VLWWSLAQTVVLVCMGFWQM. The Cytoplasmic segment spans residues 204–216; the sequence is RHLKSFFEAKKLV. Positions 213–216 match the Prevents secretion from ER motif; that stretch reads KKLV.

This sequence belongs to the EMP24/GP25L family.

It is found in the endoplasmic reticulum membrane. Functionally, eca and bai are essential, though not redundant, for dorsoventral patterning of the embryo. Specifically required during early embryogenesis for the activity of maternal tkv, while the zygotic tkv is not affected. The protein is Transmembrane emp24 domain-containing protein eca of Drosophila mojavensis (Fruit fly).